The sequence spans 87 residues: Small ribosomal subunit protein uS15 (87 aa).

The segment covering 1–19 (MDKAKKQELMAKHARHEGD) has biased composition (basic and acidic residues). Positions 1–23 (MDKAKKQELMAKHARHEGDTGSP) are disordered.

It belongs to the universal ribosomal protein uS15 family. Part of the 30S ribosomal subunit. Forms a bridge to the 50S subunit in the 70S ribosome, contacting the 23S rRNA.

Its function is as follows. One of the primary rRNA binding proteins, it binds directly to 16S rRNA where it helps nucleate assembly of the platform of the 30S subunit by binding and bridging several RNA helices of the 16S rRNA. Forms an intersubunit bridge (bridge B4) with the 23S rRNA of the 50S subunit in the ribosome. In Clostridium botulinum (strain Loch Maree / Type A3), this protein is Small ribosomal subunit protein uS15.